The chain runs to 309 residues: Aspartate carbamoyltransferase catalytic subunit (309 aa).

Carbamoyl phosphate-binding residues include R55 and T56. Position 85 (K85) interacts with L-aspartate. Carbamoyl phosphate-binding residues include R106, H135, and Q138. 2 residues coordinate L-aspartate: R168 and R230. Carbamoyl phosphate contacts are provided by L268 and P269.

Belongs to the aspartate/ornithine carbamoyltransferase superfamily. ATCase family. In terms of assembly, heterododecamer (2C3:3R2) of six catalytic PyrB chains organized as two trimers (C3), and six regulatory PyrI chains organized as three dimers (R2).

It carries out the reaction carbamoyl phosphate + L-aspartate = N-carbamoyl-L-aspartate + phosphate + H(+). Its pathway is pyrimidine metabolism; UMP biosynthesis via de novo pathway; (S)-dihydroorotate from bicarbonate: step 2/3. Functionally, catalyzes the condensation of carbamoyl phosphate and aspartate to form carbamoyl aspartate and inorganic phosphate, the committed step in the de novo pyrimidine nucleotide biosynthesis pathway. The chain is Aspartate carbamoyltransferase catalytic subunit from Aliivibrio salmonicida (strain LFI1238) (Vibrio salmonicida (strain LFI1238)).